The chain runs to 1020 residues: FERM domain-containing protein 4A (1020 aa).

The region spanning arginine 5–lysine 307 is the FERM domain. Residues lysine 343 to threonine 405 are necessary for interaction with CYTH1. The segment covering serine 351–serine 367 has biased composition (low complexity). Positions serine 351–aspartate 371 are disordered. Positions serine 367–glutamate 401 form a coiled coil. Position 515 is a phosphoserine (serine 515). The interval aspartate 538–arginine 665 is disordered. Positions glutamine 542–glutamine 551 are enriched in polar residues. Residues glycine 556–glutamine 572 are compositionally biased toward pro residues. Positions histidine 565–histidine 920 are necessary for tight junction and adherens junction localization; Requires for interaction with PARD3. A phosphoserine mark is found at serine 590 and serine 601. The segment covering valine 609–phenylalanine 624 has biased composition (basic residues). Over residues serine 626 to serine 658 the composition is skewed to polar residues. Phosphoserine occurs at positions 666 and 696. Disordered stretches follow at residues glutamate 698–serine 741 and alanine 757–proline 810. Residues arginine 773–alanine 796 show a composition bias toward low complexity. A phosphoserine mark is found at serine 785, serine 854, and serine 882. Disordered stretches follow at residues lysine 862–valine 949 and cysteine 961–glutamate 1020. Residues aspartate 893–arginine 910 show a composition bias toward basic and acidic residues. Residues serine 927–threonine 947 are compositionally biased toward low complexity. Composition is skewed to polar residues over residues alanine 967–isoleucine 981, threonine 994–serine 1004, and glutamate 1011–glutamate 1020.

Interacts (via coiled-coil domain) with CYTH1 (via coiled-coil domain). Interacts with PARD3 (via coiled-coil domain). Found in a complex with PARD3, CYTH1 and FRMD4A. Interacts with CYTH2. Interacts with CYTH3.

It is found in the cytoplasm. Its subcellular location is the cytoskeleton. The protein localises to the cell junction. It localises to the adherens junction. The protein resides in the tight junction. Its function is as follows. Scaffolding protein that regulates epithelial cell polarity by connecting ARF6 activation with the PAR3 complex. Plays a redundant role with FRMD4B in epithelial polarization. May regulate MAPT secretion by activating ARF6-signaling. This is FERM domain-containing protein 4A (Frmd4a) from Mus musculus (Mouse).